The primary structure comprises 97 residues: Peptide YY (97 aa).

Positions 1 to 28 (MMSGRRSWPAMATVLLTLLVCLGELVDA) are cleaved as a signal peptide. A Phosphoserine modification is found at Ser41. The residue at position 64 (Phe64) is a Phenylalanine amide. The propeptide occupies 68–97 (DFSEALLSILLFPDREDPPVKSRPEGAYLW).

Belongs to the NPY family.

The protein localises to the secreted. This gut peptide inhibits exocrine pancreatic secretion, has a vasoconstrictory action and inhibitis jejunal and colonic mobility. This is Peptide YY (PYY) from Bos taurus (Bovine).